We begin with the raw amino-acid sequence, 411 residues long: S-inosyl-L-homocysteine hydrolase (411 aa).

Residues D121 and E146 each contribute to the substrate site. Position 147–149 (147–149 (TTT)) interacts with NAD(+). K176 and D180 together coordinate substrate. Residues N181, 210-215 (GYGWCG), E233, N268, 289-291 (SGH), and N335 each bind NAD(+).

It belongs to the adenosylhomocysteinase family. Requires NAD(+) as cofactor.

It is found in the cytoplasm. It catalyses the reaction S-inosyl-L-homocysteine + H2O = L-homocysteine + inosine. It participates in amino-acid biosynthesis; S-adenosyl-L-methionine biosynthesis. In terms of biological role, catalyzes the hydrolysis of S-inosyl-L-homocysteine (SIH) to L-homocysteine (Hcy) and inosine. Likely functions in a S-adenosyl-L-methionine (SAM) recycling pathway from S-adenosyl-L-homocysteine (SAH) produced from SAM-dependent methylation reactions. Can also catalyze the reverse reaction in vitro, i.e. the synthesis of SIH from Hcy and inosine. The polypeptide is S-inosyl-L-homocysteine hydrolase (Methanosarcina acetivorans (strain ATCC 35395 / DSM 2834 / JCM 12185 / C2A)).